The following is a 391-amino-acid chain: Chaperone protein DnaJ (391 aa).

One can recognise a J domain in the interval 4–68; sequence DFYDVLGVSR…ETRQQYDQLG (65 aa). Positions 53–79 are enriched in basic and acidic residues; the sequence is DVLTDEETRQQYDQLGHERFEEAEKRG. 2 disordered regions span residues 53 to 94 and 117 to 136; these read DVLT…MGGA and FFGG…EQGR. 2 stretches are compositionally biased toward gly residues: residues 81 to 94 and 119 to 129; these read TGNG…MGGA and GGAGGGGGRGR. A CR-type zinc finger spans residues 152-234; the sequence is GVSKQVTVRR…CGGQGQTRER (83 aa). Residues Cys165, Cys168, Cys182, Cys185, Cys208, Cys211, Cys222, and Cys225 each contribute to the Zn(2+) site. CXXCXGXG motif repeat units lie at residues 165–172, 182–189, 208–215, and 222–229; these read CADCGGSG, CPQCDGQG, CSRCGGEG, and CSTCGGQG.

The protein belongs to the DnaJ family. Homodimer. It depends on Zn(2+) as a cofactor.

The protein localises to the cytoplasm. Functionally, participates actively in the response to hyperosmotic and heat shock by preventing the aggregation of stress-denatured proteins and by disaggregating proteins, also in an autonomous, DnaK-independent fashion. Unfolded proteins bind initially to DnaJ; upon interaction with the DnaJ-bound protein, DnaK hydrolyzes its bound ATP, resulting in the formation of a stable complex. GrpE releases ADP from DnaK; ATP binding to DnaK triggers the release of the substrate protein, thus completing the reaction cycle. Several rounds of ATP-dependent interactions between DnaJ, DnaK and GrpE are required for fully efficient folding. Also involved, together with DnaK and GrpE, in the DNA replication of plasmids through activation of initiation proteins. The protein is Chaperone protein DnaJ of Halobacterium salinarum (strain ATCC 29341 / DSM 671 / R1).